The following is a 313-amino-acid chain: Protein-methionine-sulfoxide reductase catalytic subunit MsrP (313 aa).

Positions 1–46 (MPSYRAPKIAAAEITPERFFLDRRTFIAAAAGSLALSVPKPSRAAA) form a signal peptide, tat-type signal. Mo-molybdopterin-binding positions include Asn-70, 73–74 (YE), Cys-127, Thr-162, Asn-212, Arg-217, and 228–230 (GIK).

It belongs to the MsrP family. In terms of assembly, heterodimer of a catalytic subunit (MsrP) and a heme-binding subunit (MsrQ). Requires Mo-molybdopterin as cofactor. Post-translationally, predicted to be exported by the Tat system. The position of the signal peptide cleavage has not been experimentally proven.

The protein resides in the periplasm. The catalysed reaction is L-methionyl-[protein] + a quinone + H2O = L-methionyl-(S)-S-oxide-[protein] + a quinol. The enzyme catalyses L-methionyl-[protein] + a quinone + H2O = L-methionyl-(R)-S-oxide-[protein] + a quinol. In terms of biological role, part of the MsrPQ system that repairs oxidized periplasmic proteins containing methionine sulfoxide residues (Met-O), using respiratory chain electrons. Thus protects these proteins from oxidative-stress damage caused by reactive species of oxygen and chlorine generated by the host defense mechanisms. MsrPQ is essential for the maintenance of envelope integrity under bleach stress, rescuing a wide series of structurally unrelated periplasmic proteins from methionine oxidation. The catalytic subunit MsrP is non-stereospecific, being able to reduce both (R-) and (S-) diastereoisomers of methionine sulfoxide. The chain is Protein-methionine-sulfoxide reductase catalytic subunit MsrP from Rhizobium meliloti (strain 1021) (Ensifer meliloti).